The primary structure comprises 267 residues: NAD kinase (267 aa).

Aspartate 45 functions as the Proton acceptor in the catalytic mechanism. NAD(+)-binding positions include 45–46 (DG), 123–124 (NE), arginine 149, aspartate 151, alanine 186, and asparagine 226.

It belongs to the NAD kinase family. It depends on a divalent metal cation as a cofactor.

The protein resides in the cytoplasm. It carries out the reaction NAD(+) + ATP = ADP + NADP(+) + H(+). Functionally, involved in the regulation of the intracellular balance of NAD and NADP, and is a key enzyme in the biosynthesis of NADP. Catalyzes specifically the phosphorylation on 2'-hydroxyl of the adenosine moiety of NAD to yield NADP. In Shouchella clausii (strain KSM-K16) (Alkalihalobacillus clausii), this protein is NAD kinase.